Consider the following 441-residue polypeptide: NADH-quinone oxidoreductase subunit D 1 (441 aa).

It belongs to the complex I 49 kDa subunit family. NDH-1 is composed of 14 different subunits. Subunits NuoB, C, D, E, F, and G constitute the peripheral sector of the complex.

It is found in the cell membrane. The enzyme catalyses a quinone + NADH + 5 H(+)(in) = a quinol + NAD(+) + 4 H(+)(out). Its function is as follows. NDH-1 shuttles electrons from NADH, via FMN and iron-sulfur (Fe-S) centers, to quinones in the respiratory chain. The immediate electron acceptor for the enzyme in this species is believed to be a menaquinone. Couples the redox reaction to proton translocation (for every two electrons transferred, four hydrogen ions are translocated across the cytoplasmic membrane), and thus conserves the redox energy in a proton gradient. This is NADH-quinone oxidoreductase subunit D 1 from Salinispora arenicola (strain CNS-205).